The primary structure comprises 485 residues: Glutamyl-tRNA(Gln) amidotransferase subunit A (485 aa).

Residues Lys79 and Ser154 each act as charge relay system in the active site. The active-site Acyl-ester intermediate is the Ser178.

This sequence belongs to the amidase family. GatA subfamily. As to quaternary structure, heterotrimer of A, B and C subunits.

The catalysed reaction is L-glutamyl-tRNA(Gln) + L-glutamine + ATP + H2O = L-glutaminyl-tRNA(Gln) + L-glutamate + ADP + phosphate + H(+). In terms of biological role, allows the formation of correctly charged Gln-tRNA(Gln) through the transamidation of misacylated Glu-tRNA(Gln) in organisms which lack glutaminyl-tRNA synthetase. The reaction takes place in the presence of glutamine and ATP through an activated gamma-phospho-Glu-tRNA(Gln). The protein is Glutamyl-tRNA(Gln) amidotransferase subunit A of Staphylococcus aureus (strain USA300 / TCH1516).